Consider the following 295-residue polypeptide: Spermatogenesis-associated protein 4 (295 aa).

Positions 1 to 34 are disordered; the sequence is MAAAGQAEECLPLPAAESSKTSLPTPPAVPAGKK. One can recognise a Calponin-homology (CH) domain in the interval 48-154; sequence SRLSRSVLRW…QEIYTLLTHQ (107 aa). The interval 251–295 is disordered; it reads KRRYKSRGSKEKAAQPLSKSDNDGNARKEIHVKQSGNPCENTENL. The segment covering 270–282 has biased composition (basic and acidic residues); the sequence is SDNDGNARKEIHV. Residues 284–295 are compositionally biased toward polar residues; that stretch reads QSGNPCENTENL.

As to expression, testis.

It is found in the nucleus. In terms of biological role, may play a role in apoptosis regulation. The sequence is that of Spermatogenesis-associated protein 4 (Spata4) from Mus musculus (Mouse).